The primary structure comprises 941 residues: UvrABC system protein A (941 aa).

Position 37–44 (37–44 (GLSGSGKS)) interacts with ATP. Residues 260-287 (CFKCKMSFEELEPLSFSFNSPKGACESC) form a C4-type zinc finger. 2 consecutive ABC transporter domains span residues 316 to 585 (IFGY…NNHS) and 605 to 937 (KEKH…KFLA). Residue 637 to 644 (GVSGSGKS) participates in ATP binding. The C4-type zinc-finger motif lies at 737 to 763 (CEKCQGDGDIKIEMHFLPDVLVQCDSC).

The protein belongs to the ABC transporter superfamily. UvrA family. As to quaternary structure, forms a heterotetramer with UvrB during the search for lesions.

The protein resides in the cytoplasm. Its function is as follows. The UvrABC repair system catalyzes the recognition and processing of DNA lesions. UvrA is an ATPase and a DNA-binding protein. A damage recognition complex composed of 2 UvrA and 2 UvrB subunits scans DNA for abnormalities. When the presence of a lesion has been verified by UvrB, the UvrA molecules dissociate. The polypeptide is UvrABC system protein A (Helicobacter pylori (strain J99 / ATCC 700824) (Campylobacter pylori J99)).